The following is a 536-amino-acid chain: Membrane protein insertase YidC (536 aa).

A helical transmembrane segment spans residues 5–25; sequence ALIAVILSIVFFYGYSALFPP. The tract at residues 30 to 54 is disordered; the sequence is APAPSAQQAVTGSQPGAPQASVAAV. Over residues 31–54 the composition is skewed to low complexity; it reads PAPSAQQAVTGSQPGAPQASVAAV. The next 4 helical transmembrane spans lie at 350-370, 420-440, 454-474, and 494-514; these read YGIA…PLTH, LPML…MFSI, LAGK…MVIQ, and PVVF…YWLV.

This sequence belongs to the OXA1/ALB3/YidC family. Type 1 subfamily. As to quaternary structure, interacts with the Sec translocase complex via SecD. Specifically interacts with transmembrane segments of nascent integral membrane proteins during membrane integration.

It localises to the cell inner membrane. Functionally, required for the insertion and/or proper folding and/or complex formation of integral membrane proteins into the membrane. Involved in integration of membrane proteins that insert both dependently and independently of the Sec translocase complex, as well as at least some lipoproteins. Aids folding of multispanning membrane proteins. The protein is Membrane protein insertase YidC of Geobacter metallireducens (strain ATCC 53774 / DSM 7210 / GS-15).